Reading from the N-terminus, the 290-residue chain is Nucleoid occlusion protein (290 aa).

The segment at residues 153-172 is a DNA-binding region (H-T-H motif); sequence EALAQRLGKGQSTIANKLRL.

It belongs to the ParB family.

The protein resides in the cytoplasm. Its subcellular location is the nucleoid. Effects nucleoid occlusion by binding relatively nonspecifically to DNA and preventing the assembly of the division machinery in the vicinity of the nucleoid, especially under conditions that disturb the cell cycle. It helps to coordinate cell division and chromosome segregation by preventing the formation of the Z ring through the nucleoid, which would cause chromosome breakage. In Bacillus cereus (strain G9842), this protein is Nucleoid occlusion protein.